A 154-amino-acid chain; its full sequence is Transcriptional repressor NrdR (154 aa).

Positions 1–22 (MECPNCHKNASRVIDSRPSDEN) are disordered. A zinc finger lies at 3–34 (CPNCHKNASRVIDSRPSDENRAIRRRRECENC). The ATP-cone domain occupies 49-139 (LLVIKNDGTR…IYRQFKDVSG (91 aa)).

This sequence belongs to the NrdR family. Requires Zn(2+) as cofactor.

In terms of biological role, negatively regulates transcription of bacterial ribonucleotide reductase nrd genes and operons by binding to NrdR-boxes. The chain is Transcriptional repressor NrdR from Lactobacillus gasseri (strain ATCC 33323 / DSM 20243 / BCRC 14619 / CIP 102991 / JCM 1131 / KCTC 3163 / NCIMB 11718 / NCTC 13722 / AM63).